A 2149-amino-acid chain; its full sequence is Serine/threonine-protein kinase WNK2 (2149 aa).

A compositionally biased stretch (basic and acidic residues) spans 1–10; it reads MDGDGGRRDA. 2 disordered regions span residues 1 to 75 and 87 to 183; these read MDGD…QRRV and ERAR…EDDL. 2 positions are modified to omega-N-methylarginine: Arg19 and Arg30. Ser45 bears the Phosphoserine mark. A compositionally biased stretch (pro residues) spans 95–114; that stretch reads APAPAAPAAPPGSPSVPSDP. Residues 161-172 show a composition bias toward basic and acidic residues; sequence AKPEPGRARKDE. The span at 173-182 shows a compositional bias: acidic residues; the sequence is PEEEEDDEDD. Residues 195 to 453 form the Protein kinase domain; the sequence is LKFDIELGRG…IKDLLSHAFF (259 aa). Residues Ser205, 275–278, and Lys325 each bind ATP; that span reads TELM. The Proton acceptor role is filled by Asp342. Phosphoserine; by autocatalysis is present on residues Ser352 and Ser356. Ser560 is modified (phosphoserine). Disordered stretches follow at residues 578 to 630, 703 to 728, and 1067 to 1133; these read HAQS…DSQS, SMSF…APPV, and QEEQ…ERAS. Polar residues predominate over residues 605-625; the sequence is ASVTSLASDSTFDSGQGSTVY. Positions 709–728 are enriched in pro residues; it reads VLPPPSTPVPTGPSQPAPPV. Residues 1081–1092 show a composition bias toward polar residues; it reads QSSESFGGSDVT. Phosphoserine is present on Ser1098. A compositionally biased stretch (basic residues) spans 1115–1126; the sequence is ARKHHRRSTRAR. Phosphoserine is present on Ser1210. Disordered regions lie at residues 1211–1234 and 1270–1502; these read EDTD…CGLA and PATD…GFVD. 2 stretches are compositionally biased toward low complexity: residues 1275–1292 and 1317–1353; these read SESS…EASQ and SQAG…STVP. Residues 1386–1400 are compositionally biased toward polar residues; it reads RSAQCTAQPLSTGQG. Positions 1470-1485 are enriched in pro residues; sequence LPSPPLGPTAPPPPPS. Residues Ser1507, Ser1566, and Ser1594 each carry the phosphoserine modification. Disordered regions lie at residues 1521 to 1727 and 1739 to 1778; these read VPTS…PSSP and ASSI…GGVA. A compositionally biased stretch (polar residues) spans 1553–1567; sequence SDKTPSLTQQTQPSL. Residues 1587–1597 are compositionally biased toward low complexity; sequence SSPMTAESSSS. Positions 1610–1629 are enriched in polar residues; that stretch reads ASDSSTAPSVPQDASGSSVP. Phosphoserine occurs at positions 1725, 1726, 1770, and 1797. The segment covering 1916–1928 has biased composition (polar residues); that stretch reads ASSTGHLSDSSRG. Residues 1916 to 1947 form a disordered region; sequence ASSTGHLSDSSRGPPTKDPRGTKAVQTQQPCS. Ser1962 carries the phosphoserine modification. A compositionally biased stretch (polar residues) spans 2018–2031; sequence SSLYDSPGSSTSSL. 2 disordered regions span residues 2018 to 2044 and 2122 to 2149; these read SSLY…PTLH and GPLS…EKPD. Residues 2122–2135 show a composition bias toward low complexity; it reads GPLSTTATPGATPA.

Belongs to the protein kinase superfamily. Ser/Thr protein kinase family. WNK subfamily. In terms of assembly, forms a complex with the phosphorylated form of STK39 in the brain. Requires Mg(2+) as cofactor. Post-translationally, autophosphorylated. Autophosphorylation at Ser-352 and Ser-356 promotes its activity. In terms of tissue distribution, brain and heart.

It localises to the cytoplasm. It is found in the cell membrane. It carries out the reaction L-seryl-[protein] + ATP = O-phospho-L-seryl-[protein] + ADP + H(+). The catalysed reaction is L-threonyl-[protein] + ATP = O-phospho-L-threonyl-[protein] + ADP + H(+). Its activity is regulated as follows. Activation requires autophosphorylation of Ser-356 and, to a lower extent, Ser-352. Serine/threonine-protein kinase component of the WNK2-SPAK/OSR1 kinase cascade, which plays an important role in the regulation of electrolyte homeostasis, cell signaling, survival, and proliferation. The WNK2-SPAK/OSR1 kinase cascade is composed of WNK2, which mediates phosphorylation and activation of downstream kinases OXSR1/OSR1 and STK39/SPAK. Following activation, OXSR1/OSR1 and STK39/SPAK catalyze phosphorylation of ion cotransporters, regulating their activity. Acts as an activator and inhibitor of sodium-coupled chloride cotransporters and potassium-coupled chloride cotransporters respectively. Activates SLC12A2, SCNN1A, SCNN1B, SCNN1D and SGK1 and inhibits SLC12A5. Negatively regulates the EGF-induced activation of the ERK/MAPK-pathway and the downstream cell cycle progression. Affects MAPK3/MAPK1 activity by modulating the activity of MAP2K1 and this modulation depends on phosphorylation of MAP2K1 by PAK1. WNK2 acts by interfering with the activity of PAK1 by controlling the balance of the activity of upstream regulators of PAK1 activity, RHOA and RAC1, which display reciprocal activity. This Mus musculus (Mouse) protein is Serine/threonine-protein kinase WNK2.